Here is a 215-residue protein sequence, read N- to C-terminus: Ribose-5-phosphate isomerase A (215 aa).

Substrate-binding positions include 26–29 (TGST), 79–82 (DGAD), and 92–95 (KGGG). The active-site Proton acceptor is Glu101. Lys119 provides a ligand contact to substrate.

The protein belongs to the ribose 5-phosphate isomerase family. In terms of assembly, homodimer.

It catalyses the reaction aldehydo-D-ribose 5-phosphate = D-ribulose 5-phosphate. It participates in carbohydrate degradation; pentose phosphate pathway; D-ribose 5-phosphate from D-ribulose 5-phosphate (non-oxidative stage): step 1/1. Its function is as follows. Catalyzes the reversible conversion of ribose-5-phosphate to ribulose 5-phosphate. This Xylella fastidiosa (strain 9a5c) protein is Ribose-5-phosphate isomerase A.